The sequence spans 62 residues: Small ribosomal subunit protein bS21C (62 aa).

The segment at 43–62 is disordered; sequence EKSKRKKLALHKQSKRRFRT. Residues 45 to 62 are compositionally biased toward basic residues; the sequence is SKRKKLALHKQSKRRFRT.

The protein belongs to the bacterial ribosomal protein bS21 family.

The sequence is that of Small ribosomal subunit protein bS21C from Trichormus variabilis (strain ATCC 29413 / PCC 7937) (Anabaena variabilis).